Here is a 186-residue protein sequence, read N- to C-terminus: Adenylate kinase (186 aa).

An ATP-binding site is contributed by 14-19 (GAGKGT). Residues 34 to 63 (STGDILRDHVARGTPLGERVRPIMERGDLV) form an NMP region. AMP contacts are provided by residues T35, R40, 61–63 (DLV), 84–87 (GFPR), and Q91. The tract at residues 125-135 (RRAELEGRSDD) is LID. An ATP-binding site is contributed by R126. AMP-binding residues include R132 and R143. Position 171 (G171) interacts with ATP.

Belongs to the adenylate kinase family. In terms of assembly, monomer.

It localises to the cytoplasm. It catalyses the reaction AMP + ATP = 2 ADP. It participates in purine metabolism; AMP biosynthesis via salvage pathway; AMP from ADP: step 1/1. Its function is as follows. Catalyzes the reversible transfer of the terminal phosphate group between ATP and AMP. Plays an important role in cellular energy homeostasis and in adenine nucleotide metabolism. The sequence is that of Adenylate kinase from Thermus thermophilus (strain ATCC BAA-163 / DSM 7039 / HB27).